Reading from the N-terminus, the 434-residue chain is MSRLSKEEISERLLELIKDETKPAIGCTEPVAVAFTVATGKKYMQGEILKIDLKVSKNILKNGKSVTIPNTEVCGLDIAGALGGICGDPEEGLFVFKNVNKDYLDKAREMIKNKVVTLNPIENTDPVFVEATLKGEKDEVIVILRRGHTNIEKVIVNGEIAFEKDNKNEKDNKDCDFMKELSLKDIREITEDISIEKLGFIMDGIEMNKEAAKEGLKRQKGLTLGSSLLKLQQEGKLGKDSATIARILTAAGSDLRMGGGMCPIMTSGGSGNQGLCVILPITVVAEDIKAPKEKLQRAVFFGHAVNNFVKKYTGKLSAICGCAIAAGIGATAGITWLLGGKDKEINGAILNMLANLTGMVCDGAKGSCAIKLSTSASEAVISAYLALNDIIVPNNTGIIGNTVEDTINNLGMLCKDGFYKADDVMLSIACKEVI.

This sequence belongs to the UPF0597 family.

The polypeptide is UPF0597 protein CLD_2616 (Clostridium botulinum (strain Okra / Type B1)).